A 186-amino-acid chain; its full sequence is Glutathione-independent glyoxalase DJR-1.2 (186 aa).

Catalysis depends on residues Glu20, Cys105, and His124.

The protein belongs to the peptidase C56 family. DJ-1 subfamily. As to expression, expressed in various tissues, including pharyngeal muscles, pharynx-intestinal valve, ventral nerve cord, spermatheca, rectal gland, inner labial (IL) cells of head neurons, phasmid (PHA/PHB) neurons in tail and supporting sheath/socket cells, as well as in head mesodermal cells (HMC), excretory canals and coelomocytes.

The protein resides in the cytoplasm. It catalyses the reaction methylglyoxal + H2O = (R)-lactate + H(+). In terms of biological role, catalyzes the conversion of methylglyoxal (MG) or glyoxal (GO) to D-lactate or glycolic acid respectively in a single glutathione (GSH)-independent step. May play a role in detoxifying endogenously produced glyoxals. Involved in protection against glyoxal-induced cell death. Protects dopaminergic neurons from glyoxal-dependent neuronal degeneration. The chain is Glutathione-independent glyoxalase DJR-1.2 from Caenorhabditis elegans.